The following is a 692-amino-acid chain: Putative clathrin assembly protein At1g14910 (692 aa).

The ENTH domain occupies 24–161 (RVNSDYAELD…ECFRVLKYDI (138 aa)). A disordered region spans residues 325-383 (YTPDDGLTSEDVGPSHEEHETSSPSDSAVVPSEETQLSSQSPPSVETPQNFIDTDDLLG). Residues 357–376 (EETQLSSQSPPSVETPQNFI) show a composition bias toward polar residues. Residue Ser-363 is modified to Phosphoserine. The stretch at 532 to 548 (FGEFPIVPVSEPQSTTS) is repeat 1. An 8 X 17 AA approximate tandem repeats region spans residues 532-666 (FGEFPIVPVS…PVSEPQNTTG (135 aa)). A 2; truncated repeat occupies 549–564 (FGAFPVPVSEPSNTTG). A run of 6 repeats spans residues 565–581 (FGEI…NTTA), 582–598 (FGEF…NITG), 599–615 (FGAL…NTTG), 616–632 (FGEF…NTTG), 633–649 (FGAL…KTTG), and 650–666 (LGEF…NTTG).

Expressed in the whole plant.

The protein resides in the membrane. Its subcellular location is the clathrin-coated pit. It is found in the golgi apparatus. It localises to the cytoplasmic vesicle. The protein localises to the clathrin-coated vesicle. This chain is Putative clathrin assembly protein At1g14910, found in Arabidopsis thaliana (Mouse-ear cress).